Here is a 270-residue protein sequence, read N- to C-terminus: Aliphatic sulfonates import ATP-binding protein SsuB 3 (270 aa).

The region spanning 17–238 (LAVRNLKKAF…VRGSHRLAAL (222 aa)) is the ABC transporter domain. An ATP-binding site is contributed by 49 to 56 (GRSGCGKS).

Belongs to the ABC transporter superfamily. Aliphatic sulfonates importer (TC 3.A.1.17.2) family. In terms of assembly, the complex is composed of two ATP-binding proteins (SsuB), two transmembrane proteins (SsuC) and a solute-binding protein (SsuA).

The protein localises to the cell inner membrane. It carries out the reaction ATP + H2O + aliphatic sulfonate-[sulfonate-binding protein]Side 1 = ADP + phosphate + aliphatic sulfonateSide 2 + [sulfonate-binding protein]Side 1.. Its function is as follows. Part of the ABC transporter complex SsuABC involved in aliphatic sulfonates import. Responsible for energy coupling to the transport system. The polypeptide is Aliphatic sulfonates import ATP-binding protein SsuB 3 (Pseudomonas savastanoi pv. phaseolicola (strain 1448A / Race 6) (Pseudomonas syringae pv. phaseolicola (strain 1448A / Race 6))).